Reading from the N-terminus, the 421-residue chain is MEKMHITNQEHDAFVKSHPNGDLLQLTKWAETKKLTGWYARRIAVGRDGEVQGVAQLLFKKVPKLPYTLCYISRGFVVDYSNKEALNALLDSAKEIAKAEKAYAIKIDPDVEVDKGTDALQNLKALGFKHKGFKEGLSKDYIQPRMTMITPIDKNDDELLNSFERRNRSKVRLALKRGTTVERSDREGLKTFAELMKITGERDGFLTRDISYFENIYDALHEDGDAELFLVKLDPKENIAKVNQELNELHAEIAKWQQKMKTSEKQAKKAQNMINDAQNKIAKNEDLKRDLEALEKEHPEGIYLSGALLMFAGSKSYYLYGASSNEFRDFLPNHHMQYTMMKYAREHGATTYDFGGTDNDPDKDSEHYGLWAFKKVWGTYLSEKIGEFDYVLNQPLYQLIEQVKPRLTKAKIKISRKLKRK.

It belongs to the FemABX family. As to quaternary structure, monomer.

The protein localises to the cytoplasm. It catalyses the reaction beta-D-GlcNAc-(1-&gt;4)-Mur2Ac(oyl-L-Ala-D-isoglutaminyl-L-Lys-D-Ala-D-Ala)-di-trans,octa-cis-undecaprenyl diphosphate + glycyl-tRNA(Gly) = beta-D-GlcNAc-(1-&gt;4)-Mur2Ac(oyl-L-Ala-D-isoglutaminyl-L-Lys-(N(6)-Gly)-D-Ala-D-Ala)-di-trans,octa-cis-undecaprenyl diphosphate + tRNA(Gly) + H(+). Its function is as follows. Catalyzes the incorporation of the first glycine of the pentaglycine interpeptide bridge, which is characteristic of the S.aureus peptidoglycan. This glycine is added to the epsilon-amino group of the L-lysine of the membrane-bound lipid II intermediate (GlcNAc-(beta-1,4)-N-acetylmuramic acid(-L-Ala-D-iGln-L-Lys-D-Ala-D-Ala)-pyrophosphoryl-undecaprenol), using glycyl-tRNA(Gly) as donor, in a ribosome-independent mechanism. Involved in methicillin resistance. The protein is Lipid II:glycine glycyltransferase (femX) of Staphylococcus aureus (strain USA300).